The sequence spans 90 residues: DNA-binding protein HU-beta (90 aa).

The protein belongs to the bacterial histone-like protein family. Heterodimer of an alpha and a beta chain.

Its function is as follows. Histone-like DNA-binding protein which is capable of wrapping DNA to stabilize it, and thus to prevent its denaturation under extreme environmental conditions. The chain is DNA-binding protein HU-beta (hupB) from Pseudomonas fluorescens (strain ATCC BAA-477 / NRRL B-23932 / Pf-5).